Here is a 253-residue protein sequence, read N- to C-terminus: Giant extracellular hemoglobin linker 1 chain (253 aa).

In terms of domain architecture, LDL-receptor class A spans 89–131 (HHCDDDHLSCKDVAFTCIGHNLVCDGHKDCLNGHDEDEETCSI). Disulfide bonds link C91/C105, C98/C118, and C112/C129.

As to quaternary structure, disulfide-linked dimer of identical chains. A model is proposed for the subunit structure of the Tylorrhynchus hemoglobin, consisting of 216 polypeptide chains, 192 heme-containing chains, and 24 linker chains.

Functionally, acts as a linker for the assembly of heme-containing chains in the construction of giant hemoglobin. In Tylorrhynchus heterochetus (Japanese palolo worm), this protein is Giant extracellular hemoglobin linker 1 chain.